The primary structure comprises 157 residues: Transcriptional repressor NrdR (157 aa).

The segment at 1–21 (MKCPHCGNNGSRVVDSRPTDE) is disordered. Residues 3 to 34 (CPHCGNNGSRVVDSRPTDEGRVIRRRRECEKC) fold into a zinc finger. Residues 49–139 (LLVIKKNGSR…VYRQFKDMHV (91 aa)) form the ATP-cone domain.

Belongs to the NrdR family. Zn(2+) serves as cofactor.

In terms of biological role, negatively regulates transcription of bacterial ribonucleotide reductase nrd genes and operons by binding to NrdR-boxes. The sequence is that of Transcriptional repressor NrdR from Pediococcus pentosaceus (strain ATCC 25745 / CCUG 21536 / LMG 10740 / 183-1w).